The following is a 339-amino-acid chain: Probable cytosolic iron-sulfur protein assembly protein CIAO1 (339 aa).

7 WD repeats span residues 14–53 (HPDS…WICK), 59–98 (GHQR…FECV), 103–142 (GHEN…EYEC), 148–187 (SHTQ…WVCC), 192–231 (GHES…NEQG), 250–289 (FHSR…DPQQ), and 301–339 (AHSQ…SEGI). The LYR motif; required for interaction with HSC20 signature appears at 176–178 (LYR).

The protein belongs to the WD repeat CIA1 family. Component of the CIA complex. Interacts with CIAO2A and forms a complex with CIAO2B and MMS19; the interactions with CIAO2A and CIAO2B are mutually exclusive. Interacts with CHD1L, ERCC2, IREB2 and POLD1. Component of the MMXD complex, which includes CIAO1, ERCC2, CIAO2B, MMS19 and SLC25A5. Interacts with WT1. Interacts with CIAO3. Interacts (via LYR motif) with HSC20.

It localises to the cytoplasm. Key component of the cytosolic iron-sulfur protein assembly (CIA) complex, a multiprotein complex that mediates the incorporation of iron-sulfur cluster into extramitochondrial Fe/S proteins. As a CIA complex component, interacts specifically with CIAO2A or CIAO2B and MMS19 to assist different branches of iron-sulfur protein assembly, depending of its interactors. The complex CIAO1:CIAO2B:MMS19 binds to and facilitates the assembly of most cytosolic-nuclear Fe/S proteins. CIAO1:CIAO2A specifically matures ACO1 and stabilizes IREB2. Seems to specifically modulate the transactivation activity of WT1. As part of the mitotic spindle-associated MMXD complex it may play a role in chromosome segregation. The protein is Probable cytosolic iron-sulfur protein assembly protein CIAO1 of Bos taurus (Bovine).